Consider the following 212-residue polypeptide: Protein-L-isoaspartate O-methyltransferase 1 (212 aa).

The active site involves Ser60.

The protein belongs to the methyltransferase superfamily. L-isoaspartyl/D-aspartyl protein methyltransferase family.

Its subcellular location is the cytoplasm. The catalysed reaction is [protein]-L-isoaspartate + S-adenosyl-L-methionine = [protein]-L-isoaspartate alpha-methyl ester + S-adenosyl-L-homocysteine. Its function is as follows. Catalyzes the methyl esterification of L-isoaspartyl residues in peptides and proteins that result from spontaneous decomposition of normal L-aspartyl and L-asparaginyl residues. It plays a role in the repair and/or degradation of damaged proteins. In Anaeromyxobacter sp. (strain Fw109-5), this protein is Protein-L-isoaspartate O-methyltransferase 1.